A 712-amino-acid chain; its full sequence is Lactoperoxidase (712 aa).

A signal peptide spans 1-26 (MRVLLHLPALLASLILLQAAASTTRA). Positions 27 to 80 (QTTRTSAISDTVSQAKVQVNKAFLDSRTRLKTAMSSETPTSRQLSEYLKHAKGR) are excised as a propeptide. The N-linked (GlcNAc...) asparagine glycan is linked to Asn106. An intrachain disulfide couples Cys132 to Cys145. The N-linked (GlcNAc...) asparagine glycan is linked to Asn212. Position 225 (Asp225) interacts with heme b. His226 acts as the Proton acceptor in catalysis. Residue Asp227 coordinates Ca(2+). Intrachain disulfides connect Cys246/Cys256 and Cys250/Cys274. Ca(2+)-binding residues include Thr301, Phe303, Asp305, and Ser307. Residue Ser315 is modified to Phosphoserine. 2 N-linked (GlcNAc...) asparagine glycosylation sites follow: Asn322 and Asn358. A disulfide bridge links Cys354 with Cys365. Heme b contacts are provided by Glu375 and His468. Residue Tyr482 is modified to 3'-nitrotyrosine. 2 disulfides stabilise this stretch: Cys573–Cys630 and Cys671–Cys696.

Belongs to the peroxidase family. XPO subfamily. Ca(2+) serves as cofactor. It depends on heme b as a cofactor. As to expression, mammary gland, milk and salivary gland. Found in bronchial submucosal glands.

It localises to the secreted. The protein localises to the cytoplasm. The enzyme catalyses 2 a phenolic donor + H2O2 = 2 a phenolic radical donor + 2 H2O. The catalysed reaction is thiocyanate + H2O2 + H(+) = hypothiocyanous acid + H2O. It catalyses the reaction iodide + H2O2 = hypoiodite + H2O. Heme-containing oxidoreductase which catalyzes the conversion of thiocyanate (SCN(-)) into antimicrobial agent hypothiocyanous acid (OSCN(-)) in the presence of hydrogen peroxide (H2O2). Also involved in the conversion of iodide (I(-)) into hypoiodite (IO(-)) in the presence of H2O2. Responsible for the inactivation of a wide range of micro-organisms and hence, important component of defense mechanism. Shows antibacterial properties against Pseudomonas aeruginosa. The lactoperoxidase-SCN(-)-H2O2 system shows antibacterial properties against Burkholderia cepacia and Haemophilus influenzae in vitro. Present in mammary and salivary gland secretions and may contribute to airway host defense against infection. May contribute to maintaining an appropriate H2O2 cellular level, therefore protecting cells from H2O2-caused injuries and inflammation. The polypeptide is Lactoperoxidase (Homo sapiens (Human)).